Consider the following 438-residue polypeptide: Xylose isomerase (438 aa).

Active-site residues include histidine 103 and aspartate 106. Residues glutamate 234, glutamate 270, histidine 273, aspartate 298, aspartate 309, aspartate 311, and aspartate 341 each contribute to the Mg(2+) site.

This sequence belongs to the xylose isomerase family. In terms of assembly, homotetramer. Mg(2+) is required as a cofactor.

It localises to the cytoplasm. The enzyme catalyses alpha-D-xylose = alpha-D-xylulofuranose. In Bacteroides thetaiotaomicron (strain ATCC 29148 / DSM 2079 / JCM 5827 / CCUG 10774 / NCTC 10582 / VPI-5482 / E50), this protein is Xylose isomerase.